Reading from the N-terminus, the 590-residue chain is Protein I'm not dead yet (590 aa).

Transmembrane regions (helical) follow at residues 43 to 63, 82 to 102, 115 to 135, 153 to 173, 224 to 244, 270 to 290, 329 to 349, 373 to 393, 457 to 477, 509 to 529, and 540 to 560; these read GLVV…NEGA, ALPL…MGIM, TLVM…CNLH, LHFG…NAAC, LCYY…TIIG, TFMF…FVFL, LGPM…MVVM, SMPT…YAFL, VLPN…LTAF, AGLA…NALV, and MAIA…VFCQ.

The protein belongs to the SLC13A/DASS transporter (TC 2.A.47) family. NADC subfamily. In terms of tissue distribution, in adults, abundantly expressed in the fat body, basolateral region of midgut cells and oenocytes. Low level expression is seen in the halteres, procardia, restricted regions of the esophagus and hindgut, base of the legs and in a subset of cells in the third segment of the antennae.

It localises to the basolateral cell membrane. Its function is as follows. Cation-independent electroneutral transporter (not associated with membrane depolarization) of a variety of tricarboxylic and dicarboxylic acid-cycle intermediates. There is also small, but detectable, transport of monocarboxylics. Transport is through the epithelium of the gut and across the plasma membranes of organs involved in intermediary metabolism and storage. Affinity for substrates is citrate &gt; succinate &gt; pyruvate. Fumarate, a-ketoglutarate, and glutarate are also transported, but not lactate. Transport mechanism that is not coupled to Na(+), K(+), or Cl(-). Function is shown in Xenopus oocytes and human retinal pigment epithelial (HRPE) cell lines. This chain is Protein I'm not dead yet (Indy), found in Drosophila melanogaster (Fruit fly).